We begin with the raw amino-acid sequence, 158 residues long: Succinate dehydrogenase assembly factor 2, mitochondrial (158 aa).

The N-terminal 17 residues, 1 to 17 (MFSANIARKVVCSVCRA), are a transit peptide targeting the mitochondrion.

It belongs to the SDHAF2 family. In terms of assembly, interacts with sdha within the SDH catalytic dimer.

It localises to the mitochondrion matrix. In terms of biological role, plays an essential role in the assembly of succinate dehydrogenase (SDH), an enzyme complex (also referred to as respiratory complex II) that is a component of both the tricarboxylic acid (TCA) cycle and the mitochondrial electron transport chain, and which couples the oxidation of succinate to fumarate with the reduction of ubiquinone (coenzyme Q) to ubiquinol. Required for flavinylation (covalent attachment of FAD) of the flavoprotein subunit sdha of the SDH catalytic dimer. The polypeptide is Succinate dehydrogenase assembly factor 2, mitochondrial (Danio rerio (Zebrafish)).